A 425-amino-acid chain; its full sequence is Kynurenine/alpha-aminoadipate aminotransferase, mitochondrial (425 aa).

The N-terminal 29 residues, 1-29 (MNYSRFLTATSLARKTSPIRATVEIMSRA), are a transit peptide targeting the mitochondrion. Arginine 20 contributes to the substrate binding site. A Phosphoserine modification is found at serine 40. Tyrosine 74 and tyrosine 142 together coordinate substrate. Lysine 172 is modified (N6-succinyllysine). N6-acetyllysine is present on lysine 179. The span at 179–188 (KPEDSKDPTK) shows a compositional bias: basic and acidic residues. A disordered region spans residues 179 to 208 (KPEDSKDPTKRTPKFLYTIPNGNNPTGNSL). The span at 198–208 (PNGNNPTGNSL) shows a compositional bias: polar residues. Asparagine 202 is a binding site for substrate. Lysine 263 bears the N6-(pyridoxal phosphate)lysine; alternate mark. N6-acetyllysine; alternate is present on residues lysine 263 and lysine 339. 2 positions are modified to N6-succinyllysine; alternate: lysine 263 and lysine 339. Residue lysine 351 is modified to N6-acetyllysine. Position 367 is an N6-acetyllysine; alternate (lysine 367). N6-succinyllysine; alternate is present on lysine 367. Position 399 (arginine 399) interacts with substrate. Lysine 422 is modified (N6-acetyllysine).

The protein belongs to the class-I pyridoxal-phosphate-dependent aminotransferase family. As to quaternary structure, homodimer. It depends on pyridoxal 5'-phosphate as a cofactor. Post-translationally, the N-terminus is blocked.

It localises to the mitochondrion. The catalysed reaction is L-kynurenine + 2-oxoglutarate = kynurenate + L-glutamate + H2O. It catalyses the reaction L-2-aminoadipate + 2-oxoglutarate = 2-oxoadipate + L-glutamate. The enzyme catalyses glycine + 2-oxoglutarate = glyoxylate + L-glutamate. It carries out the reaction L-kynurenine + glyoxylate = kynurenate + glycine + H2O. The catalysed reaction is 3-hydroxy-L-kynurenine + glyoxylate = xanthurenate + glycine + H2O. It catalyses the reaction 2-oxohexanoate + L-kynurenine = L-2-aminohexanoate + kynurenate + H2O. The enzyme catalyses 3-phenylpyruvate + L-kynurenine = kynurenate + L-phenylalanine + H2O. It carries out the reaction 4-methylsulfanyl-2-oxobutanoate + L-kynurenine = kynurenate + L-methionine + H2O. The catalysed reaction is 2-oxo-3-sulfanylpropanoate + L-kynurenine = kynurenate + L-cysteine + H2O. It catalyses the reaction indole-3-pyruvate + L-kynurenine = kynurenate + L-tryptophan + H2O. The enzyme catalyses 2-oxopentanoate + L-kynurenine = L-2-aminopentanoate + kynurenate + H2O. It carries out the reaction 4-methyl-2-oxopentanoate + L-kynurenine = kynurenate + L-leucine + H2O. The catalysed reaction is glyoxylate + L-methionine = 4-methylsulfanyl-2-oxobutanoate + glycine. It catalyses the reaction L-2-aminoadipate + glyoxylate = 2-oxoadipate + glycine. The enzyme catalyses L-tyrosine + glyoxylate = 3-(4-hydroxyphenyl)pyruvate + glycine. It carries out the reaction glyoxylate + L-phenylalanine = 3-phenylpyruvate + glycine. The catalysed reaction is L-tryptophan + glyoxylate = indole-3-pyruvate + glycine. It catalyses the reaction L-leucine + glyoxylate = 4-methyl-2-oxopentanoate + glycine. The enzyme catalyses 2-oxobutanoate + L-kynurenine = (2S)-2-aminobutanoate + kynurenate + H2O. It carries out the reaction 2-oxoadipate + L-kynurenine = L-2-aminoadipate + kynurenate + H2O. The catalysed reaction is 2-oxoadipate + L-kynurenine = 4-(2-aminophenyl)-2,4-dioxobutanoate + L-2-aminoadipate. It functions in the pathway amino-acid degradation; L-lysine degradation via saccharopine pathway; glutaryl-CoA from L-lysine: step 4/6. Its function is as follows. Transaminase with broad substrate specificity. Has transaminase activity towards aminoadipate, kynurenine, methionine and glutamate. Shows activity also towards tryptophan, aspartate and hydroxykynurenine. Accepts a variety of oxo-acids as amino-group acceptors, with a preference for 2-oxoglutarate, 2-oxocaproic acid, phenylpyruvate and alpha-oxo-gamma-methiol butyric acid. Can also use glyoxylate as amino-group acceptor (in vitro). This chain is Kynurenine/alpha-aminoadipate aminotransferase, mitochondrial, found in Rattus norvegicus (Rat).